The sequence spans 325 residues: tRNA N6-adenosine threonylcarbamoyltransferase (325 aa).

Fe cation contacts are provided by His-111 and His-115. Substrate is bound by residues 134-138 (LVSGG), Asp-167, Gly-180, Asp-184, and Asn-284. Asp-312 contributes to the Fe cation binding site.

The protein belongs to the KAE1 / TsaD family. Fe(2+) serves as cofactor.

It is found in the cytoplasm. It catalyses the reaction L-threonylcarbamoyladenylate + adenosine(37) in tRNA = N(6)-L-threonylcarbamoyladenosine(37) in tRNA + AMP + H(+). In terms of biological role, required for the formation of a threonylcarbamoyl group on adenosine at position 37 (t(6)A37) in tRNAs that read codons beginning with adenine. Is involved in the transfer of the threonylcarbamoyl moiety of threonylcarbamoyl-AMP (TC-AMP) to the N6 group of A37, together with TsaE and TsaB. TsaD likely plays a direct catalytic role in this reaction. The polypeptide is tRNA N6-adenosine threonylcarbamoyltransferase (Trichodesmium erythraeum (strain IMS101)).